The following is a 341-amino-acid chain: UDP-N-acetylenolpyruvoylglucosamine reductase (341 aa).

The FAD-binding PCMH-type domain occupies 15-185 (VEQSCLSLIE…TAVGLRLPKA (171 aa)). R161 is a catalytic residue. S231 (proton donor) is an active-site residue. Residue E327 is part of the active site.

It belongs to the MurB family. FAD serves as cofactor.

Its subcellular location is the cytoplasm. It catalyses the reaction UDP-N-acetyl-alpha-D-muramate + NADP(+) = UDP-N-acetyl-3-O-(1-carboxyvinyl)-alpha-D-glucosamine + NADPH + H(+). The protein operates within cell wall biogenesis; peptidoglycan biosynthesis. Its function is as follows. Cell wall formation. This Shewanella sp. (strain ANA-3) protein is UDP-N-acetylenolpyruvoylglucosamine reductase.